A 172-amino-acid chain; its full sequence is Protein 3 (172 aa).

This Northern cereal mosaic virus (NCMV) protein is Protein 3 (3).